The chain runs to 219 residues: Protein DMP5 (219 aa).

Residues 1–24 (MSALRLRNANTPAPELDELSDQTP) are disordered. The next 4 membrane-spanning stretches (helical) occupy residues 51–71 (LSNLLPTGTLLAFQLLTPVFT), 82–102 (FLTAVLLFLLAASCFVSSFTD), 142–162 (MRFVDWIHATLSVLVFGAVAL), and 182–202 (VLDIVPVGVGVMCSLLFMVFP).

Belongs to the plant DMP1 protein family.

Its subcellular location is the endoplasmic reticulum membrane. Involved in membrane remodeling. The sequence is that of Protein DMP5 from Arabidopsis thaliana (Mouse-ear cress).